We begin with the raw amino-acid sequence, 279 residues long: Tryptophan prenyltransferase ComQ (279 aa).

Mg(2+)-binding residues include D67 and D71.

It belongs to the FPP/GGPP synthase family. Mg(2+) serves as cofactor.

The protein localises to the cell membrane. The catalysed reaction is L-tryptophyl-[protein] + (2E)-geranyl diphosphate = (2S,3R)-3-geranyl-2,3-dihydro-2,N(alpha)-cyclo-L-tryptophyl-[protein] + diphosphate. Its function is as follows. Part of a major quorum-sensing system that regulates the development of genetic competence. Involved in the maturation of the competence pheromone ComX. Acts by catalyzing the transfer of a geranyl group on the ComX pheromone. Cannot use farnesyl diphosphate (FPP). This chain is Tryptophan prenyltransferase ComQ, found in Bacillus spizizenii (Bacillus subtilis subsp. spizizenii).